The chain runs to 118 residues: Mediator of RNA polymerase II transcription subunit 11 (118 aa).

Belongs to the Mediator complex subunit 11 family. In terms of assembly, component of the Mediator complex.

The protein resides in the nucleus. Component of the Mediator complex, a coactivator involved in the regulated transcription of nearly all RNA polymerase II-dependent genes. Mediator functions as a bridge to convey information from gene-specific regulatory proteins to the basal RNA polymerase II transcription machinery. Mediator is recruited to promoters by direct interactions with regulatory proteins and serves as a scaffold for the assembly of a functional pre-initiation complex with RNA polymerase II and the general transcription factors. The sequence is that of Mediator of RNA polymerase II transcription subunit 11 (med11) from Xenopus tropicalis (Western clawed frog).